The sequence spans 51 residues: Photosystem I reaction center subunit IX (51 aa).

Residues 17–37 form a helical membrane-spanning segment; that stretch reads FFSTAPVIALVFFTLTAGFLV.

It belongs to the PsaJ family.

The protein localises to the cellular thylakoid membrane. May help in the organization of the PsaE and PsaF subunits. This chain is Photosystem I reaction center subunit IX, found in Acaryochloris marina (strain MBIC 11017).